Here is a 356-residue protein sequence, read N- to C-terminus: MYPTSGCARVLMACPAPAMLRGPLLRPSTTAIRGLRGSPLLYHYAATSNSNMRYFSSTSRRWIKEFFAPPKETDHIVESVTTWKHPVFTEKQMKEIAIAHREAKNWSDWVALGTVRFLRWATDLATGYRHAAPGKQGVEVPEQFQMTERKWVIRFIFLETVAGVPGMVGGMLRHLRSLRRMKRDNGWIETLLEEAYNERMHLLSFLKLAQPGWFMRLMVLGAQGVFFNGFFISYLISPRTCHRFVGYLEEEAVMTYTHAIKDLESGKLPNWANQPAPDIAVAYWQMPEGKRTILDLLYYIRADEAKHREVNHTLANLKQGVDPNPYAAKYDNPEAPHPTKSAEIVKPTGWERDEVI.

The chain crosses the membrane as a helical span at residues 152–172 (VIRFIFLETVAGVPGMVGGML). The Fe cation site is built by Glu-159, Glu-198, and His-201. A helical membrane pass occupies residues 217–237 (LMVLGAQGVFFNGFFISYLIS). Fe cation is bound by residues Glu-249, Glu-304, and His-307. The segment at 330–356 (YDNPEAPHPTKSAEIVKPTGWERDEVI) is disordered.

This sequence belongs to the alternative oxidase family. Requires Fe cation as cofactor.

The protein localises to the mitochondrion inner membrane. Catalyzes cyanide-resistant oxygen consumption. May increase respiration when the cytochrome respiratory pathway is restricted, or in response to low temperatures. The chain is Alternative oxidase, mitochondrial (AOX1) from Ajellomyces capsulatus (Darling's disease fungus).